Reading from the N-terminus, the 213-residue chain is Endonuclease III (213 aa).

The HhH domain maps to 108-127; it reads FKELIKLPGVGRKTANVVLN. [4Fe-4S] cluster-binding residues include Cys187, Cys194, Cys197, and Cys203.

Belongs to the Nth/MutY family. It depends on [4Fe-4S] cluster as a cofactor.

It catalyses the reaction 2'-deoxyribonucleotide-(2'-deoxyribose 5'-phosphate)-2'-deoxyribonucleotide-DNA = a 3'-end 2'-deoxyribonucleotide-(2,3-dehydro-2,3-deoxyribose 5'-phosphate)-DNA + a 5'-end 5'-phospho-2'-deoxyribonucleoside-DNA + H(+). Its function is as follows. DNA repair enzyme that has both DNA N-glycosylase activity and AP-lyase activity. The DNA N-glycosylase activity releases various damaged pyrimidines from DNA by cleaving the N-glycosidic bond, leaving an AP (apurinic/apyrimidinic) site. The AP-lyase activity cleaves the phosphodiester bond 3' to the AP site by a beta-elimination, leaving a 3'-terminal unsaturated sugar and a product with a terminal 5'-phosphate. This Rickettsia felis (strain ATCC VR-1525 / URRWXCal2) (Rickettsia azadi) protein is Endonuclease III.